Reading from the N-terminus, the 500-residue chain is Glucose-6-phosphate isomerase (500 aa).

E332 acts as the Proton donor in catalysis. Active-site residues include H363 and K473.

The protein belongs to the GPI family.

It is found in the cytoplasm. The enzyme catalyses alpha-D-glucose 6-phosphate = beta-D-fructose 6-phosphate. The protein operates within carbohydrate biosynthesis; gluconeogenesis. It participates in carbohydrate degradation; glycolysis; D-glyceraldehyde 3-phosphate and glycerone phosphate from D-glucose: step 2/4. Its function is as follows. Catalyzes the reversible isomerization of glucose-6-phosphate to fructose-6-phosphate. The protein is Glucose-6-phosphate isomerase of Rhizorhabdus wittichii (strain DSM 6014 / CCUG 31198 / JCM 15750 / NBRC 105917 / EY 4224 / RW1) (Sphingomonas wittichii).